A 213-amino-acid chain; its full sequence is Kynurenine formamidase (213 aa).

Residue Trp-18 coordinates substrate. Residues His-48, His-52, and Asp-54 each coordinate Zn(2+). The active-site Proton donor/acceptor is His-58. His-160 and Glu-172 together coordinate Zn(2+).

This sequence belongs to the Cyclase 1 superfamily. KynB family. In terms of assembly, homodimer. Zn(2+) serves as cofactor.

The catalysed reaction is N-formyl-L-kynurenine + H2O = L-kynurenine + formate + H(+). It participates in amino-acid degradation; L-tryptophan degradation via kynurenine pathway; L-kynurenine from L-tryptophan: step 2/2. In terms of biological role, catalyzes the hydrolysis of N-formyl-L-kynurenine to L-kynurenine, the second step in the kynurenine pathway of tryptophan degradation. The chain is Kynurenine formamidase from Burkholderia cenocepacia (strain ATCC BAA-245 / DSM 16553 / LMG 16656 / NCTC 13227 / J2315 / CF5610) (Burkholderia cepacia (strain J2315)).